Here is a 162-residue protein sequence, read N- to C-terminus: Protein hcp1 (162 aa).

The protein belongs to the hcp1 family. As to quaternary structure, hexamer. Three hcp1 monomers form two closely related hexameric rings with a 40 Angstrom internal diameter.

Its subcellular location is the secreted. Its function is as follows. Required for assembly of the protein secretion apparatus HSI-I. Actively secreted during chronic infection of cystic fibrosis patients. The chain is Protein hcp1 (hcp1) from Pseudomonas aeruginosa (strain ATCC 15692 / DSM 22644 / CIP 104116 / JCM 14847 / LMG 12228 / 1C / PRS 101 / PAO1).